The sequence spans 506 residues: Putative basic amino acid antiporter YfcC (506 aa).

The next 13 helical transmembrane spans lie at 19–39 (LVII…VPVG), 107–127 (GTAV…GIVM), 148–168 (ILFI…FGMG), 171–191 (AVAF…DSIT), 208–228 (WMNP…VLSG), 231–251 (LRIV…MVYA), 287–307 (WLVL…VIVN), 310–330 (FIPE…IIGV), 352–372 (MMIA…LVGN), 398–418 (AVAA…VTSG), 419–439 (SGQA…VGVN), 442–462 (VTVL…PTSA), and 485–505 (LLGL…LMGY).

To H.influenzae HI_0594. The protein to B.subtilis YcgA.

It is found in the cell inner membrane. Its function is as follows. Metabolomic profiling of different yfcC over-expression and deletion strains suggests that it may affect the glyoxylate shunt. The chain is Putative basic amino acid antiporter YfcC (yfcC) from Escherichia coli (strain K12).